Reading from the N-terminus, the 334-residue chain is DCN1-like protein 3 (334 aa).

The 190-residue stretch at 112 to 301 (VSHQTLSKLF…LFDDFVDYEK (190 aa)) folds into the DCUN1 domain. Residues 308 to 334 (SGIHDDDNNNDDPLQSHVKAEDPGLVS) are disordered. Positions 325-334 (VKAEDPGLVS) are enriched in basic and acidic residues.

It is found in the cell membrane. Promotes neddylation of cullin components of SCF-type E3 ubiquitin ligase complexes and thus regulates SCF-type complex activity. Function promotes cell proliferation. In Drosophila melanogaster (Fruit fly), this protein is DCN1-like protein 3.